Reading from the N-terminus, the 256-residue chain is Small ribosomal subunit protein eS1 (256 aa).

Position 2 is an N-acetylalanine; partial (Ala-2).

This sequence belongs to the eukaryotic ribosomal protein eS1 family. Component of the small ribosomal subunit. Mature ribosomes consist of a small (40S) and a large (60S) subunit. The 40S subunit contains about 33 different proteins and 1 molecule of RNA (18S). The 60S subunit contains about 49 different proteins and 3 molecules of RNA (25S, 5.8S and 5S).

Its subcellular location is the cytoplasm. This Coprinopsis cinerea (strain Okayama-7 / 130 / ATCC MYA-4618 / FGSC 9003) (Inky cap fungus) protein is Small ribosomal subunit protein eS1.